We begin with the raw amino-acid sequence, 289 residues long: 2-dehydro-3-deoxyphosphooctonate aldolase (289 aa).

The protein belongs to the KdsA family.

It localises to the cytoplasm. The enzyme catalyses D-arabinose 5-phosphate + phosphoenolpyruvate + H2O = 3-deoxy-alpha-D-manno-2-octulosonate-8-phosphate + phosphate. It functions in the pathway carbohydrate biosynthesis; 3-deoxy-D-manno-octulosonate biosynthesis; 3-deoxy-D-manno-octulosonate from D-ribulose 5-phosphate: step 2/3. It participates in bacterial outer membrane biogenesis; lipopolysaccharide biosynthesis. In Cupriavidus necator (strain ATCC 17699 / DSM 428 / KCTC 22496 / NCIMB 10442 / H16 / Stanier 337) (Ralstonia eutropha), this protein is 2-dehydro-3-deoxyphosphooctonate aldolase.